The chain runs to 493 residues: Glutamyl-tRNA(Gln) amidotransferase subunit A (493 aa).

Residues Lys-79 and Ser-159 each act as charge relay system in the active site. Ser-183 serves as the catalytic Acyl-ester intermediate.

The protein belongs to the amidase family. GatA subfamily. As to quaternary structure, heterotrimer of A, B and C subunits.

The enzyme catalyses L-glutamyl-tRNA(Gln) + L-glutamine + ATP + H2O = L-glutaminyl-tRNA(Gln) + L-glutamate + ADP + phosphate + H(+). Its function is as follows. Allows the formation of correctly charged Gln-tRNA(Gln) through the transamidation of misacylated Glu-tRNA(Gln) in organisms which lack glutaminyl-tRNA synthetase. The reaction takes place in the presence of glutamine and ATP through an activated gamma-phospho-Glu-tRNA(Gln). The chain is Glutamyl-tRNA(Gln) amidotransferase subunit A from Brucella suis biovar 1 (strain 1330).